The following is a 363-amino-acid chain: UDP-3-O-acylglucosamine N-acyltransferase (363 aa).

Histidine 252 serves as the catalytic Proton acceptor.

It belongs to the transferase hexapeptide repeat family. LpxD subfamily. As to quaternary structure, homotrimer.

It catalyses the reaction a UDP-3-O-[(3R)-3-hydroxyacyl]-alpha-D-glucosamine + a (3R)-hydroxyacyl-[ACP] = a UDP-2-N,3-O-bis[(3R)-3-hydroxyacyl]-alpha-D-glucosamine + holo-[ACP] + H(+). It participates in bacterial outer membrane biogenesis; LPS lipid A biosynthesis. Functionally, catalyzes the N-acylation of UDP-3-O-acylglucosamine using 3-hydroxyacyl-ACP as the acyl donor. Is involved in the biosynthesis of lipid A, a phosphorylated glycolipid that anchors the lipopolysaccharide to the outer membrane of the cell. The protein is UDP-3-O-acylglucosamine N-acyltransferase of Cupriavidus taiwanensis (strain DSM 17343 / BCRC 17206 / CCUG 44338 / CIP 107171 / LMG 19424 / R1) (Ralstonia taiwanensis (strain LMG 19424)).